Reading from the N-terminus, the 431-residue chain is Dual-specificity RNA methyltransferase RlmN (431 aa).

Residues 1-26 (MATASLDTARPERRAGSDPFIEKTPE) form a disordered region. Residues 9–26 (ARPERRAGSDPFIEKTPE) are compositionally biased toward basic and acidic residues. Catalysis depends on E138, which acts as the Proton acceptor. The Radical SAM core domain maps to 144 to 394 (ANDRGTLCVS…VRTPRGRDIL (251 aa)). The cysteines at positions 151 and 397 are disulfide-linked. [4Fe-4S] cluster-binding residues include C158, C162, and C165. S-adenosyl-L-methionine-binding positions include 223–224 (GE), S255, 277–279 (SLH), and N354. The active-site S-methylcysteine intermediate is the C397.

Belongs to the radical SAM superfamily. RlmN family. It depends on [4Fe-4S] cluster as a cofactor.

It is found in the cytoplasm. The catalysed reaction is adenosine(2503) in 23S rRNA + 2 reduced [2Fe-2S]-[ferredoxin] + 2 S-adenosyl-L-methionine = 2-methyladenosine(2503) in 23S rRNA + 5'-deoxyadenosine + L-methionine + 2 oxidized [2Fe-2S]-[ferredoxin] + S-adenosyl-L-homocysteine. It catalyses the reaction adenosine(37) in tRNA + 2 reduced [2Fe-2S]-[ferredoxin] + 2 S-adenosyl-L-methionine = 2-methyladenosine(37) in tRNA + 5'-deoxyadenosine + L-methionine + 2 oxidized [2Fe-2S]-[ferredoxin] + S-adenosyl-L-homocysteine. Its function is as follows. Specifically methylates position 2 of adenine 2503 in 23S rRNA and position 2 of adenine 37 in tRNAs. m2A2503 modification seems to play a crucial role in the proofreading step occurring at the peptidyl transferase center and thus would serve to optimize ribosomal fidelity. The sequence is that of Dual-specificity RNA methyltransferase RlmN from Methylobacterium sp. (strain 4-46).